A 366-amino-acid polypeptide reads, in one-letter code: Tyrosyl-DNA phosphodiesterase 2 (366 aa).

Methionine 1 is subject to N-acetylmethionine. The span at 1 to 22 (MASGSSSDAAESAEPAAAPAAA) shows a compositional bias: low complexity. A disordered region spans residues 1–30 (MASGSSSDAAESAEPAAAPAAAETEEDQVK). Lysine 30 participates in a covalent cross-link: Glycyl lysine isopeptide (Lys-Gly) (interchain with G-Cter in SUMO2). Position 95 is a phosphothreonine; by ACVR1B (threonine 95). Residues 126-130 (NIDGL) form an interaction with 5' end of substrate DNA region. Residues aspartate 128 and glutamate 158 each coordinate Mg(2+). The interaction with 5' end of substrate DNA stretch occupies residues 232–237 (HLESTR). Residue aspartate 268 is the Proton donor/acceptor of the active site. Residues 270–272 (NLR) are interaction with 5' end of substrate DNA.

It belongs to the CCR4/nocturin family. Interacts with TRAF2, TRAF3, TRAF5, TRAF6, TNFRSF8/CD30, TNFRSF5/CD40, TNFRSF1B/TNF-R75, ETS1, ETS2, FLI1, SMAD3 and ACVR1B/ALK4. The cofactor is Mg(2+). Mn(2+) serves as cofactor. In terms of processing, ubiquitinated by TRAF6.

The protein localises to the nucleus. It is found in the PML body. The protein resides in the nucleolus. It localises to the cytoplasm. Functionally, DNA repair enzyme that can remove a variety of covalent adducts from DNA through hydrolysis of a 5'-phosphodiester bond, giving rise to DNA with a free 5' phosphate. Catalyzes the hydrolysis of dead-end complexes between DNA and the topoisomerase 2 (TOP2) active site tyrosine residue. The 5'-tyrosyl DNA phosphodiesterase activity can enable the repair of TOP2-induced DNA double-strand breaks/DSBs without the need for nuclease activity, creating a 'clean' DSB with 5'-phosphate termini that are ready for ligation. Thereby, protects the transcription of many genes involved in neurological development and maintenance from the abortive activity of TOP2. Hydrolyzes 5'-phosphoglycolates on protruding 5' ends on DSBs due to DNA damage by radiation and free radicals. Has preference for single-stranded DNA or duplex DNA with a 4 base pair overhang as substrate. Also has 3'-tyrosyl DNA phosphodiesterase activity, but less efficiently and much slower than TDP1. Constitutes the major if not only 5'-tyrosyl-DNA phosphodiesterase in cells. Also acts as an adapter by participating in the specific activation of MAP3K7/TAK1 in response to TGF-beta: associates with components of the TGF-beta receptor-TRAF6-TAK1 signaling module and promotes their ubiquitination dependent complex formation. Involved in non-canonical TGF-beta induced signaling routes. May also act as a negative regulator of ETS1 and may inhibit NF-kappa-B activation. Acts as a regulator of ribosome biogenesis following stress. The sequence is that of Tyrosyl-DNA phosphodiesterase 2 (Tdp2) from Rattus norvegicus (Rat).